We begin with the raw amino-acid sequence, 30 residues long: Photosystem I reaction center subunit XII (30 aa).

A helical membrane pass occupies residues 5–25 (SQIFFALCIALTAAVLAIGLG).

It belongs to the PsaM family.

It is found in the plastid. It localises to the chloroplast thylakoid membrane. The chain is Photosystem I reaction center subunit XII from Emiliania huxleyi (Coccolithophore).